Reading from the N-terminus, the 118-residue chain is Co-chaperonin GroES (118 aa).

Belongs to the GroES chaperonin family. In terms of assembly, heptamer of 7 subunits arranged in a ring. Interacts with the chaperonin GroEL.

The protein resides in the cytoplasm. Functionally, together with the chaperonin GroEL, plays an essential role in assisting protein folding. The GroEL-GroES system forms a nano-cage that allows encapsulation of the non-native substrate proteins and provides a physical environment optimized to promote and accelerate protein folding. GroES binds to the apical surface of the GroEL ring, thereby capping the opening of the GroEL channel. The polypeptide is Co-chaperonin GroES (Helicobacter pylori (strain HPAG1)).